An 874-amino-acid polypeptide reads, in one-letter code: Alanine--tRNA ligase (874 aa).

His564, His568, Cys666, and His670 together coordinate Zn(2+).

The protein belongs to the class-II aminoacyl-tRNA synthetase family. Zn(2+) is required as a cofactor.

It is found in the cytoplasm. The catalysed reaction is tRNA(Ala) + L-alanine + ATP = L-alanyl-tRNA(Ala) + AMP + diphosphate. Functionally, catalyzes the attachment of alanine to tRNA(Ala) in a two-step reaction: alanine is first activated by ATP to form Ala-AMP and then transferred to the acceptor end of tRNA(Ala). Also edits incorrectly charged Ser-tRNA(Ala) and Gly-tRNA(Ala) via its editing domain. In Carboxydothermus hydrogenoformans (strain ATCC BAA-161 / DSM 6008 / Z-2901), this protein is Alanine--tRNA ligase.